We begin with the raw amino-acid sequence, 1576 residues long: Disco-interacting protein 2 homolog B (1576 aa).

Phosphoserine is present on residues serine 9, serine 50, and serine 53. In terms of domain architecture, DMAP1-binding spans 12-131; it reads AVAALPPEVR…PMPTKRRSTF (120 aa). Residues 31-167 are disordered; sequence LSEGDITQKG…AALSAALQQS (137 aa). Residues 52–62 show a composition bias toward polar residues; that stretch reads YSPQTQETDSA. Residues 70 to 83 are compositionally biased toward low complexity; that stretch reads QTPAPSAAQTSAPS. Threonine 71 is modified (phosphothreonine). The segment covering 92-104 has biased composition (basic and acidic residues); it reads GARDERYRSDIHT. Serine 100 bears the Phosphoserine mark. Threonine 140 carries the phosphothreonine modification. A phosphoserine mark is found at serine 146, serine 148, and serine 153. The span at 155 to 167 shows a compositional bias: low complexity; sequence RRQAALSAALQQS. Phosphoserine is present on residues serine 178, serine 193, and serine 203. Positions 179–201 are disordered; sequence IQGSSTSSSASSTLSHGEVKGTS. Residues 182–193 are compositionally biased toward low complexity; that stretch reads SSTSSSASSTLS. The interval 217 to 246 is disordered; that stretch reads SAPPDVTTTTSSSSSSSSIRPANIDLPPSG. Positions 223–234 are enriched in low complexity; the sequence is TTTTSSSSSSSS. Residue serine 259 is modified to Phosphoserine.

This sequence belongs to the DIP2 family. In terms of assembly, interacts with alpha-tubulin. As to expression, moderately expressed in adult brain, placenta, skeletal muscle, heart, kidney, pancreas, lung, spleen and colon. Expression was weaker in adult liver, kidney, spleen, and ovary, and in fetal brain and liver. In the brain, it is expressed in the cerebral cortex; the frontal, parietal, occipital and temporal lobes; the paracentral gyrus; the pons; the corpus callosum and the hippocampus. Highest expression levels in the brain were found in the cerebral cortex and the frontal and parietal lobes.

The protein localises to the cell projection. It localises to the dendrite. It is found in the axon. Its subcellular location is the perikaryon. Functionally, negatively regulates axonal outgrowth and is essential for normal synaptic transmission. Not required for regulation of axon polarity. Promotes acetylation of alpha-tubulin. The sequence is that of Disco-interacting protein 2 homolog B (DIP2B) from Homo sapiens (Human).